A 333-amino-acid chain; its full sequence is Cilia- and flagella-associated protein 119 (333 aa).

Polar residues predominate over residues 1 to 10 (MITPSSSQSL). Disordered regions lie at residues 1–70 (MITP…ANLF) and 309–333 (RLSSKLAALEQPFQTPPSKGKTKTK). Residue S34 is modified to Phosphoserine. Residues 44-58 (TDMQTESPAEATSSP) show a composition bias toward polar residues. The stretch at 284-319 (IKSQLSKELRQLQQLVEERLKESEERLSSKLAALEQ) forms a coiled coil.

The protein localises to the cell projection. It is found in the cilium. Its subcellular location is the flagellum. It localises to the cytoplasmic vesicle. The protein resides in the secretory vesicle. The protein localises to the acrosome. It is found in the cytoplasm. The protein is Cilia- and flagella-associated protein 119 of Mus musculus (Mouse).